Consider the following 427-residue polypeptide: Peptidase B (427 aa).

2 residues coordinate Mn(2+): lysine 195 and aspartate 200. Lysine 207 is a catalytic residue. The Mn(2+) site is built by aspartate 218, aspartate 277, and glutamate 279. The active site involves arginine 281.

This sequence belongs to the peptidase M17 family. In terms of assembly, homohexamer. The cofactor is Mn(2+).

Its subcellular location is the cytoplasm. It catalyses the reaction Release of an N-terminal amino acid, Xaa, from a peptide or arylamide. Xaa is preferably Glu or Asp but may be other amino acids, including Leu, Met, His, Cys and Gln.. Probably plays an important role in intracellular peptide degradation. The polypeptide is Peptidase B (Shigella boydii serotype 18 (strain CDC 3083-94 / BS512)).